The sequence spans 382 residues: 8-amino-7-oxononanoate synthase (382 aa).

The substrate site is built by arginine 21 and histidine 131. Residues serine 178, histidine 206, and threonine 232 each contribute to the pyridoxal 5'-phosphate site. Position 235 is an N6-(pyridoxal phosphate)lysine (lysine 235). Threonine 349 lines the substrate pocket.

It belongs to the class-II pyridoxal-phosphate-dependent aminotransferase family. BioF subfamily. In terms of assembly, homodimer. Pyridoxal 5'-phosphate serves as cofactor.

The catalysed reaction is 6-carboxyhexanoyl-[ACP] + L-alanine + H(+) = (8S)-8-amino-7-oxononanoate + holo-[ACP] + CO2. Its pathway is cofactor biosynthesis; biotin biosynthesis. Its function is as follows. Catalyzes the decarboxylative condensation of pimeloyl-[acyl-carrier protein] and L-alanine to produce 8-amino-7-oxononanoate (AON), [acyl-carrier protein], and carbon dioxide. This chain is 8-amino-7-oxononanoate synthase, found in Serratia marcescens.